Reading from the N-terminus, the 243-residue chain is Small ribosomal subunit protein uS5 (243 aa).

Basic and acidic residues-rich tracts occupy residues 1-21 (MPIDKKQEKNFTNKIQEEGQK) and 34-46 (LEEKLNKNPDHKG). Residues 1-85 (MPIDKKQEKN…NFKKNANKKP (85 aa)) form a disordered region. Positions 89 to 152 (FEEKIVNIAR…KDAQNNLIRV (64 aa)) constitute an S5 DRBM domain.

The protein belongs to the universal ribosomal protein uS5 family. As to quaternary structure, part of the 30S ribosomal subunit. Contacts proteins S4 and S8.

With S4 and S12 plays an important role in translational accuracy. Its function is as follows. Located at the back of the 30S subunit body where it stabilizes the conformation of the head with respect to the body. The polypeptide is Small ribosomal subunit protein uS5 (Mycoplasma mobile (strain ATCC 43663 / 163K / NCTC 11711) (Mesomycoplasma mobile)).